The sequence spans 156 residues: Ribosomal RNA large subunit methyltransferase H (156 aa).

Residues leucine 73, glycine 104, and 123 to 128 (LSSLTL) each bind S-adenosyl-L-methionine.

Belongs to the RNA methyltransferase RlmH family. As to quaternary structure, homodimer.

It is found in the cytoplasm. The enzyme catalyses pseudouridine(1915) in 23S rRNA + S-adenosyl-L-methionine = N(3)-methylpseudouridine(1915) in 23S rRNA + S-adenosyl-L-homocysteine + H(+). In terms of biological role, specifically methylates the pseudouridine at position 1915 (m3Psi1915) in 23S rRNA. The protein is Ribosomal RNA large subunit methyltransferase H of Ralstonia pickettii (strain 12J).